Here is a 479-residue protein sequence, read N- to C-terminus: Ribosomal RNA small subunit methyltransferase F (479 aa).

S-adenosyl-L-methionine-binding positions include 128 to 134 (ASAPGSK), Glu152, Asp179, and Asp197. Cys250 acts as the Nucleophile in catalysis.

This sequence belongs to the class I-like SAM-binding methyltransferase superfamily. RsmB/NOP family.

The protein resides in the cytoplasm. It catalyses the reaction cytidine(1407) in 16S rRNA + S-adenosyl-L-methionine = 5-methylcytidine(1407) in 16S rRNA + S-adenosyl-L-homocysteine + H(+). In terms of biological role, specifically methylates the cytosine at position 1407 (m5C1407) of 16S rRNA. In Shewanella halifaxensis (strain HAW-EB4), this protein is Ribosomal RNA small subunit methyltransferase F.